A 175-amino-acid chain; its full sequence is ATP-dependent protease subunit HslV (175 aa).

T2 is an active-site residue. 3 residues coordinate Na(+): A156, C159, and T162.

The protein belongs to the peptidase T1B family. HslV subfamily. As to quaternary structure, a double ring-shaped homohexamer of HslV is capped on each side by a ring-shaped HslU homohexamer. The assembly of the HslU/HslV complex is dependent on binding of ATP.

The protein localises to the cytoplasm. The enzyme catalyses ATP-dependent cleavage of peptide bonds with broad specificity.. Its activity is regulated as follows. Allosterically activated by HslU binding. Protease subunit of a proteasome-like degradation complex believed to be a general protein degrading machinery. This Rhizobium rhizogenes (strain K84 / ATCC BAA-868) (Agrobacterium radiobacter) protein is ATP-dependent protease subunit HslV.